We begin with the raw amino-acid sequence, 71 residues long: Protein SlyX homolog (71 aa).

It belongs to the SlyX family.

This Rhodopseudomonas palustris (strain BisB5) protein is Protein SlyX homolog.